A 421-amino-acid chain; its full sequence is Diaminopimelate decarboxylase (421 aa).

Lysine 62 carries the N6-(pyridoxal phosphate)lysine modification. Residues glycine 237 and 279–282 contribute to the pyridoxal 5'-phosphate site; that span reads EPGR. Residues arginine 282, arginine 319, and tyrosine 323 each contribute to the substrate site. Residue cysteine 349 is the Proton donor of the active site. Glutamate 350 and tyrosine 379 together coordinate substrate. Tyrosine 379 contacts pyridoxal 5'-phosphate.

Belongs to the Orn/Lys/Arg decarboxylase class-II family. LysA subfamily. Homodimer. Pyridoxal 5'-phosphate serves as cofactor.

The catalysed reaction is meso-2,6-diaminopimelate + H(+) = L-lysine + CO2. Its pathway is amino-acid biosynthesis; L-lysine biosynthesis via DAP pathway; L-lysine from DL-2,6-diaminopimelate: step 1/1. Specifically catalyzes the decarboxylation of meso-diaminopimelate (meso-DAP) to L-lysine. Plays a role in beta-lactam antibiotic resistance. The protein is Diaminopimelate decarboxylase (lysA) of Staphylococcus aureus (strain COL).